The primary structure comprises 148 residues: UPF0260 protein ECA2365 (148 aa).

It belongs to the UPF0260 family.

This is UPF0260 protein ECA2365 from Pectobacterium atrosepticum (strain SCRI 1043 / ATCC BAA-672) (Erwinia carotovora subsp. atroseptica).